A 705-amino-acid chain; its full sequence is Dynein axonemal intermediate chain 1 (705 aa).

Disordered regions lie at residues 1-44 (MPSK…AVRP) and 122-169 (AGSQ…DVPA). A phosphoserine mark is found at serine 124 and serine 127. The segment covering 124–135 (SQESVKVVTSDT) has biased composition (polar residues). Over residues 136-159 (EILEEEEEPKEGEGEGEGEAEGEA) the composition is skewed to acidic residues. WD repeat units lie at residues 386–426 (SSES…SQPC), 435–478 (KHTD…LVHI), 543–583 (AHNM…PMFI), 585–625 (DLNA…YEAI), and 633–672 (KKKN…RKMP).

This sequence belongs to the dynein intermediate chain family. Consists of at least two heavy chains and a number of intermediate and light chains. Interacts with BICD2. Interacts with CFAP45 and CFAP52. Interacts with CFAP53.

It localises to the cytoplasm. Its subcellular location is the cytoskeleton. It is found in the cilium axoneme. Functionally, part of the dynein complex of respiratory cilia. This Rattus norvegicus (Rat) protein is Dynein axonemal intermediate chain 1 (Dnai1).